A 929-amino-acid polypeptide reads, in one-letter code: Protocadherin gamma-B7 (929 aa).

Positions 1-30 are cleaved as a signal peptide; the sequence is MGGSCAQRRRAGPRQVLFPLLLPLFYPTLC. 6 Cadherin domains span residues 31-133, 134-242, 243-347, 348-452, 453-562, and 570-675; these read EPIR…APQF, QKDE…PPVF, SQDV…SPEI, IITS…APVF, GQSA…APRV, and DGSA…LPDF. Residues 31-691 lie on the Extracellular side of the membrane; the sequence is EPIRYSIPEE…SDSQAEMQFY (661 aa). 2 N-linked (GlcNAc...) asparagine glycosylation sites follow: asparagine 419 and asparagine 545. Residues 692 to 712 traverse the membrane as a helical segment; sequence LVVALALISVLFLLAVILAIA. Residues 713–929 lie on the Cytoplasmic side of the membrane; the sequence is LRLRQSFSPT…KKKSGKKEKK (217 aa). Disordered stretches follow at residues 806 to 838 and 899 to 929; these read QAPPNTDWRFSQAQRPGTSGSQNGDDTGTWPNN and ATLTNAAGKRDGKAPAGGNGNKKKSGKKEKK. Residues 807 to 838 show a composition bias toward polar residues; that stretch reads APPNTDWRFSQAQRPGTSGSQNGDDTGTWPNN. The span at 919-929 shows a compositional bias: basic residues; that stretch reads NKKKSGKKEKK.

Its subcellular location is the cell membrane. Its function is as follows. Potential calcium-dependent cell-adhesion protein. May be involved in the establishment and maintenance of specific neuronal connections in the brain. In Pan troglodytes (Chimpanzee), this protein is Protocadherin gamma-B7 (PCDHGB7).